The sequence spans 363 residues: Jasmonate-induced oxygenase 3 (363 aa).

The region spanning 210–312 (ESGGCLRVNY…RLSLAFFYNP (103 aa)) is the Fe2OG dioxygenase domain. Arg-216 is a binding site for jasmonate. 2 residues coordinate 2-oxoglutarate: Asn-218 and Tyr-220. Residues His-235, Asp-237, and His-293 each contribute to the Fe cation site. Residues Arg-303 and Ser-305 each contribute to the 2-oxoglutarate site. Jasmonate-binding residues include Arg-342 and Arg-346.

It belongs to the iron/ascorbate-dependent oxidoreductase family. L-ascorbate serves as cofactor. It depends on Fe(2+) as a cofactor.

The catalysed reaction is jasmonate + 2-oxoglutarate + O2 = (1R,2R)-12-hydroxyjasmonate + succinate + CO2. 2-oxoglutarate-dependent dioxygenase involved in the oxidation of jasmonate (JA), a stress-induced phytohormone synthesized in response to attack by pathogens and herbivores, which triggers the activation of defense responses via the JA-mediated signaling pathway. Converts JA to 12-hydroxyjasmonate (12OH-JA), an inactive form of JA. Is specific to free JA, and cannot oxidize the bioactive form jasmonoyl-L-isoleucine (JA-Ile) or other JA-amino acid conjugates. Prevents over-accumulation of JA and indirectly its bioactive form JA-Ile under stress response. Acts as a negative regulator of JA-mediated defense signaling, by contributing to 12OH-JA accumulation, which represses JA defense responses upon infection by the fungal pathogen Botrytis cinerea. Acts as a negative regulator of JA-mediated defense responses upon infestation by the herbivorous caterpillar Mamestra brassicae. The chain is Jasmonate-induced oxygenase 3 from Arabidopsis thaliana (Mouse-ear cress).